Here is a 426-residue protein sequence, read N- to C-terminus: MKHLTEMVRQHKEGKTNGIYAVCSAHPLVLEAAIRYASANQTPLLIEATSNQVDQFGGYTGMTPADFRGFVCQLADSLNFPQDALILGGDHLGPNRWQNLPAAQAMANADDLIKSYVAAGFKKIHLDCSMSCQDDPIPLTDDIVAERAARLAKVAEETCREHFGAADLEYVIGTEVPVPGGAHETLSELAVTTPDAARATLEAHRHAFEKQGLSAIWPRIIALVVQPGVEFDHTNVIDYQPVKATALSQMVENYETLIFEAHSTDYQTPQSLRQLVIDHFAILKVGPALTFALREALFSLAAIEEELVPAKACSGLRQVLENVMLDRPEYWQSHYHGDGNARRLARGYSYSDRVRYYWPDSQIDDAFAHLVRNLADSPIPLPLISQYLPLQYVKVRSGELQPTPRELIINHIQDILAQYHTACEGQ.

This sequence belongs to the GatZ/KbaZ family. KbaZ subfamily. In terms of assembly, forms a complex with KbaY.

It participates in carbohydrate metabolism; D-tagatose 6-phosphate degradation; D-glyceraldehyde 3-phosphate and glycerone phosphate from D-tagatose 6-phosphate: step 2/2. Functionally, component of the tagatose-1,6-bisphosphate aldolase KbaYZ that is required for full activity and stability of the Y subunit. Could have a chaperone-like function for the proper and stable folding of KbaY. When expressed alone, KbaZ does not show any aldolase activity. This is D-tagatose-1,6-bisphosphate aldolase subunit KbaZ from Escherichia coli (strain SMS-3-5 / SECEC).